Here is a 917-residue protein sequence, read N- to C-terminus: PAX3- and PAX7-binding protein 1 (917 aa).

Over residues 1–11 (MFRKARRVNVR) the composition is skewed to basic residues. Disordered stretches follow at residues 1–123 (MFRK…FKVK), 143–205 (LEKS…GAFS), and 229–275 (RKKR…RIVF). Ser-16 is subject to Phosphoserine. Positions 16–28 (SEEEERERDEEQE) are enriched in acidic residues. Gly residues-rich tracts occupy residues 40–50 (EEAGPGGGDRA) and 73–85 (AEAGGGFPGGAEP). A Glycyl lysine isopeptide (Lys-Gly) (interchain with G-Cter in SUMO1); alternate cross-link involves residue Lys-149. A Glycyl lysine isopeptide (Lys-Gly) (interchain with G-Cter in SUMO2); alternate cross-link involves residue Lys-149. Ser-154, Ser-155, and Ser-158 each carry phosphoserine. Residues 161–172 (PLDKTGHVKDTN) are compositionally biased toward basic and acidic residues. Positions 183–193 (GEDEMDMESEK) are enriched in acidic residues. The residue at position 191 (Ser-191) is a Phosphoserine. A compositionally biased stretch (basic and acidic residues) spans 234-256 (MARELGDFTPHDNEPGKGRLVRE). A compositionally biased stretch (acidic residues) spans 257–268 (DENDASDDEDDD). Phosphoserine is present on residues Ser-262 and Ser-295. Disordered stretches follow at residues 362 to 381 (SSDAKSQKTDNTVPFKTPSN) and 530 to 564 (AEREARRTRRRQAREQTGKMADHLEGLSSDDEETS). Residues 378–558 (TPSNEMTPVT…MADHLEGLSS (181 aa)) are necessary and sufficient for interaction with PAX7. Over residues 542–554 (AREQTGKMADHLE) the composition is skewed to basic and acidic residues. 2 positions are modified to phosphoserine: Ser-557 and Ser-558. Thr-563 is subject to Phosphothreonine.

Belongs to the GCF family. As to quaternary structure, interacts with PAX3 and PAX7. Interacts with WDR5; associates with a histone methyltransferase (HMT) complex composed at least of RBBP5, ASH2L, SET1, SET2 and KMT2A/MLL1, KMT2D/MLL2, KMT2C/MLL3 and KMT2B/MLL4 through direct interaction with WDR5. In terms of tissue distribution, ubiquitous.

It is found in the nucleus. In terms of biological role, adapter protein linking the transcription factors PAX3 and PAX7 to the histone methylation machinery and involved in myogenesis. Associates with a histone methyltransferase complex that specifically mediates dimethylation and trimethylation of 'Lys-4' of histone H3. Mediates the recruitment of that complex to the transcription factors PAX3 and PAX7 on chromatin to regulate the expression of genes involved in muscle progenitor cells proliferation including ID3 and CDC20. The polypeptide is PAX3- and PAX7-binding protein 1 (PAXBP1) (Homo sapiens (Human)).